The following is a 139-amino-acid chain: Nuclear transcription factor Y subunit B-4 (139 aa).

Residues 8-14 (LPIANVG) mediate DNA binding. The tract at residues 35-46 (VQECATEFISFV) is subunit association domain (SAD). Positions 90 to 115 (YREAERERTEHNKGSNDSGNEKETNT) are enriched in basic and acidic residues. A disordered region spans residues 90-139 (YREAERERTEHNKGSNDSGNEKETNTRSDVQNQSTKFIRVVEKGSSSSAR). Over residues 116–125 (RSDVQNQSTK) the composition is skewed to polar residues.

This sequence belongs to the NFYB/HAP3 subunit family. As to quaternary structure, heterotrimeric transcription factor composed of three components, NF-YA, NF-YB and NF-YC. NF-YB and NF-YC must interact and dimerize for NF-YA association and DNA binding. Expressed in flowers, siliques and young rosettes.

Its subcellular location is the nucleus. Component of the NF-Y/HAP transcription factor complex. The NF-Y complex stimulates the transcription of various genes by recognizing and binding to a CCAAT motif in promoters. In Arabidopsis thaliana (Mouse-ear cress), this protein is Nuclear transcription factor Y subunit B-4 (NFYB4).